A 175-amino-acid chain; its full sequence is 2-oxo-4-hydroxy-4-carboxy-5-ureidoimidazoline decarboxylase (175 aa).

The active-site Proton donor is the H67. Substrate contacts are provided by residues P68, 84–88 (SRGEQ), and 119–123 (FVICA). The Microbody targeting signal signature appears at 173 to 175 (TKL).

Belongs to the OHCU decarboxylase family. In terms of assembly, homodimer.

It is found in the peroxisome. It carries out the reaction 5-hydroxy-2-oxo-4-ureido-2,5-dihydro-1H-imidazole-5-carboxylate + H(+) = (S)-allantoin + CO2. Its pathway is purine metabolism; urate degradation; (S)-allantoin from urate: step 3/3. Its function is as follows. Catalyzes the stereoselective decarboxylation of 2-oxo-4-hydroxy-4-carboxy-5-ureidoimidazoline (OHCU) to (S)-allantoin. This is 2-oxo-4-hydroxy-4-carboxy-5-ureidoimidazoline decarboxylase (urad) from Amia calva (Bowfin).